The chain runs to 447 residues: Tubulin beta-2 chain (447 aa).

Residues Q11, E69, S138, G142, T143, G144, N204, and N226 each contribute to the GTP site. Position 69 (E69) interacts with Mg(2+). Over residues 419-428 (VSEYQQYQDA) the composition is skewed to polar residues. The interval 419–447 (VSEYQQYQDATSDEEGEYEDEDQEPEEDM) is disordered. Positions 429–447 (TSDEEGEYEDEDQEPEEDM) are enriched in acidic residues.

It belongs to the tubulin family. In terms of assembly, dimer of alpha and beta chains. A typical microtubule is a hollow water-filled tube with an outer diameter of 25 nm and an inner diameter of 15 nM. Alpha-beta heterodimers associate head-to-tail to form protofilaments running lengthwise along the microtubule wall with the beta-tubulin subunit facing the microtubule plus end conferring a structural polarity. Microtubules usually have 13 protofilaments but different protofilament numbers can be found in some organisms and specialized cells. Mg(2+) is required as a cofactor.

The protein localises to the cytoplasm. It is found in the cytoskeleton. Tubulin is the major constituent of microtubules, a cylinder consisting of laterally associated linear protofilaments composed of alpha- and beta-tubulin heterodimers. Microtubules grow by the addition of GTP-tubulin dimers to the microtubule end, where a stabilizing cap forms. Below the cap, tubulin dimers are in GDP-bound state, owing to GTPase activity of alpha-tubulin. This Triticum aestivum (Wheat) protein is Tubulin beta-2 chain (TUBB2).